Consider the following 347-residue polypeptide: NADH-ubiquinone oxidoreductase chain 2 (347 aa).

The next 9 membrane-spanning stretches (helical) occupy residues 3–23, 25–45, 59–79, 111–131, 149–169, 200–220, 242–262, 274–294, and 325–345; these read PPIFIIIMTTVISGTMMVLIS, HWLLIWIGFEMNMLAIIPILM, YFLTQATASMILMLGIIINLL, FHFWVPEVTQGISLSSGMILL, INPNLLMSMAIMSMLVAGWGG, LMHLNLVMYIMMTLGTFMLFM, LLILMLMLSLGGLPPLSGFIP, NMIIIPTFMAIAALLSLYFYM, and LLPPLIIMSTMLLPMTPMMLI.

Belongs to the complex I subunit 2 family. In terms of assembly, core subunit of respiratory chain NADH dehydrogenase (Complex I) which is composed of 45 different subunits. Interacts with TMEM242.

It is found in the mitochondrion inner membrane. The enzyme catalyses a ubiquinone + NADH + 5 H(+)(in) = a ubiquinol + NAD(+) + 4 H(+)(out). Its function is as follows. Core subunit of the mitochondrial membrane respiratory chain NADH dehydrogenase (Complex I) which catalyzes electron transfer from NADH through the respiratory chain, using ubiquinone as an electron acceptor. Essential for the catalytic activity and assembly of complex I. In Ailurus fulgens (Himalayan red panda), this protein is NADH-ubiquinone oxidoreductase chain 2.